Here is a 1442-residue protein sequence, read N- to C-terminus: CD109 antigen (1442 aa).

The signal sequence occupies residues 1–21 (MRSRRLLSAAHLLCLCAVALA). 6 N-linked (GlcNAc...) asparagine glycosylation sites follow: N67, N117, N246, N278, N370, and N421. The tract at residues 595–704 (DKSVTLMENS…TWIWLDAYMG (110 aa)) is bait region (approximate). The isoglutamyl cysteine thioester (Cys-Gln) cross-link spans 923–926 (CGEQ). N-linked (GlcNAc...) asparagine glycosylation occurs at N1088. A1419 carries GPI-anchor amidated alanine lipidation. Positions 1420 to 1442 (TDSLRRSSSLLVFCSVLLYFVQH) are cleaved as a propeptide — removed in mature form.

Belongs to the protease inhibitor I39 (alpha-2-macroglobulin) family. Heterodimer; disulfide-linked. Interacts with TGFB1 and TGFBR1. Forms a heteromeric complex with TGFBR1, TGFBR2 and TGFBR3 in a ligand-independent manner. In terms of processing, N-glycosylated. Post-translationally, 2 forms of 150 (p150) and 120 kDa (p120) exist due to proteolytic degradation from a 180 kDa form.

The protein resides in the cell membrane. Modulates negatively TGFB1 signaling in keratinocytes. The sequence is that of CD109 antigen (Cd109) from Mus musculus (Mouse).